The sequence spans 334 residues: Trans-3-hydroxy-L-proline dehydratase (334 aa).

The Proton acceptor role is filled by Cys-91. Substrate-binding positions include 92–93 (GH), Asp-250, and 255–256 (GT).

Belongs to the proline racemase family.

The enzyme catalyses trans-3-hydroxy-L-proline = 1-pyrroline-2-carboxylate + H2O. Its function is as follows. Catalyzes the dehydration of trans-3-hydroxy-L-proline (t3LHyp) to Delta(1)-pyrroline-2-carboxylate (Pyr2C). Is likely involved in a degradation pathway that converts t3LHyp to L-proline, which allows B.cereus to grow on t3LHyp as a sole carbon source. Displays no proline racemase activity. In Bacillus cereus (strain ATCC 14579 / DSM 31 / CCUG 7414 / JCM 2152 / NBRC 15305 / NCIMB 9373 / NCTC 2599 / NRRL B-3711), this protein is Trans-3-hydroxy-L-proline dehydratase.